The chain runs to 291 residues: 3-methylcatechol 2,3-dioxygenase (291 aa).

VOC domains follow at residues Arg-5 to Gly-119 and Gly-143 to Gly-264. The Fe cation site is built by His-146, His-210, and Glu-260.

This sequence belongs to the extradiol ring-cleavage dioxygenase family. As to quaternary structure, homooctamer. It depends on Fe(2+) as a cofactor.

The catalysed reaction is 3-methylcatechol + O2 = 2-hydroxy-6-oxo-2,4-heptadienoate + H(+). The protein operates within xenobiotic degradation; toluene degradation. The chain is 3-methylcatechol 2,3-dioxygenase (todE) from Pseudomonas putida (strain ATCC 700007 / DSM 6899 / JCM 31910 / BCRC 17059 / LMG 24140 / F1).